A 194-amino-acid chain; its full sequence is Putative manganese efflux pump MntP (194 aa).

6 helical membrane passes run 3 to 23 (PFSI…AAIG), 37 to 57 (LRAG…GWVL), 69 to 89 (DHWI…IAGL), 110 to 132 (LGLA…SLAF), 147 to 167 (CTFS…NLIG), and 172 to 192 (ILGG…HLGA).

Belongs to the MntP (TC 9.B.29) family.

It localises to the cell inner membrane. Probably functions as a manganese efflux pump. In Xanthomonas oryzae pv. oryzae (strain MAFF 311018), this protein is Putative manganese efflux pump MntP.